A 223-amino-acid chain; its full sequence is UPF0173 metal-dependent hydrolase Amet_4625 (223 aa).

Belongs to the UPF0173 family.

This chain is UPF0173 metal-dependent hydrolase Amet_4625, found in Alkaliphilus metalliredigens (strain QYMF).